Reading from the N-terminus, the 595-residue chain is Trafficking protein particle complex subunit 14 (595 aa).

Disordered stretches follow at residues 84–111 and 494–513; these read ASVS…ECVE and SNPP…SSPA.

Component of the multisubunit TRAPP II complex, which includes at least TRAPPC1, TRAPPC2, TRAPPC2L, TRAPPC3, TRAPPC4, TRAPPC5, TRAPPC6A/B, TRAPPC9, TRAPPC10 and TRAPPC14. TRAPPC9, TRAPPC10 and TRAPPC14 are specific subunits of the TRAPP II complex. Interacts with alpha-tubulin during mitosis.

It is found in the cytoplasm. The protein resides in the cytoskeleton. Its subcellular location is the spindle. The protein localises to the vesicle. It localises to the midbody. In terms of biological role, specific subunit of the TRAPP (transport protein particle) II complex, a highly conserved vesicle tethering complex that functions in late Golgi trafficking as a membrane tether. TRAPP II complex also has GEF activity toward RAB1A. TRAPPC14 is required for ciliogenesis. In Danio rerio (Zebrafish), this protein is Trafficking protein particle complex subunit 14 (trappc14).